We begin with the raw amino-acid sequence, 468 residues long: DNA methyltransferase 1-associated protein 1 (468 aa).

Composition is skewed to basic and acidic residues over residues 1–11 and 26–48; these read MATGADVRDIL and SKKDIINPDKKKSKKSSETLTFK. A disordered region spans residues 1–48; that stretch reads MATGADVRDILELGGPEGDAASGTISKKDIINPDKKKSKKSSETLTFK. Residue lysine 27 forms a Glycyl lysine isopeptide (Lys-Gly) (interchain with G-Cter in SUMO2) linkage. Positions 149–199 constitute an SANT domain; sequence DDAWTKAETDHLFDLSRRFDLRFVVIHDRYDHQQFKKRSVEDLKERYYHIC. Lysine 214 is covalently cross-linked (Glycyl lysine isopeptide (Lys-Gly) (interchain with G-Cter in SUMO2)). Residues 225–275 are a coiled coil; it reads RRKEQLERLYNRTPEQVAEEEYLLQELRKIEARKKEREKRSQDLQKLITAA. Over residues 258–267 the composition is skewed to basic and acidic residues; it reads KKEREKRSQD. Disordered stretches follow at residues 258–305 and 411–468; these read KKER…PAVP and AVGP…AKKP. Residue threonine 446 is modified to Phosphothreonine. Serine 449 carries the post-translational modification Phosphoserine.

Component of the NuA4 histone acetyltransferase complex which contains the catalytic subunit KAT5/TIP60 and the subunits EP400, TRRAP/PAF400, BRD8/SMAP, EPC1, DMAP1/DNMAP1, RUVBL1/TIP49, RUVBL2, ING3, actin, ACTL6A/BAF53A, MORF4L1/MRG15, MORF4L2/MRGX, MRGBP, YEATS4/GAS41, VPS72/YL1 and MEAF6. Component of a NuA4-related complex which contains EP400, TRRAP/PAF400, SRCAP, BRD8/SMAP, EPC1, DMAP1/DNMAP1, RUVBL1/TIP49, RUVBL2, actin, ACTL6A/BAF53A, VPS72 and YEATS4/GAS41. DMAP1 also forms a complex with DNMT1 and HDAC2. Throughout S phase it interacts directly with the N-terminus of DNMT1, which serves to recruit DMAP1 to replication foci. DMAP1 interacts with ING1, a component of the mSIN3A transcription repressor complex, although this interaction is not required for recruitment of ING1 to heterochromatin. Interacts directly with the transcriptional corepressor TSG101. Interacts with URI1. Interacts with the pro-apoptotic protein DAXX.

The protein resides in the nucleus. It localises to the cytoplasm. Functionally, involved in transcription repression and activation. Its interaction with HDAC2 may provide a mechanism for histone deacetylation in heterochromatin following replication of DNA at late firing origins. Can also repress transcription independently of histone deacetylase activity. May specifically potentiate DAXX-mediated repression of glucocorticoid receptor-dependent transcription. Component of the NuA4 histone acetyltransferase (HAT) complex which is involved in transcriptional activation of select genes principally by acetylation of nucleosomal histones H4 and H2A. This modification may both alter nucleosome - DNA interactions and promote interaction of the modified histones with other proteins which positively regulate transcription. This complex may be required for the activation of transcriptional programs associated with oncogene and proto-oncogene mediated growth induction, tumor suppressor mediated growth arrest and replicative senescence, apoptosis, and DNA repair. NuA4 may also play a direct role in DNA repair when recruited to sites of DNA damage. Participates in the nuclear localization of URI1 and increases its transcriptional corepressor activity. The chain is DNA methyltransferase 1-associated protein 1 (Dmap1) from Mus musculus (Mouse).